A 338-amino-acid chain; its full sequence is tRNA-specific 2-thiouridylase MnmA (338 aa).

Residues 6 to 13 (AMSGGVDS) and Met-32 each bind ATP. The active-site Nucleophile is Cys-92. Cysteines 92 and 186 form a disulfide. Gly-116 is an ATP binding site. The interval 134-136 (KDQ) is interaction with tRNA. Cys-186 acts as the Cysteine persulfide intermediate in catalysis. An interaction with tRNA region spans residues 288-289 (RY).

It belongs to the MnmA/TRMU family.

It localises to the cytoplasm. It catalyses the reaction S-sulfanyl-L-cysteinyl-[protein] + uridine(34) in tRNA + AH2 + ATP = 2-thiouridine(34) in tRNA + L-cysteinyl-[protein] + A + AMP + diphosphate + H(+). Catalyzes the 2-thiolation of uridine at the wobble position (U34) of tRNA, leading to the formation of s(2)U34. The protein is tRNA-specific 2-thiouridylase MnmA of Campylobacter lari (strain RM2100 / D67 / ATCC BAA-1060).